The primary structure comprises 874 residues: MKAAEIREKFLKFFESKGHTIVRSSSLVPGNDPTLLFTNSGMVQFKDVFLGAESRPYSRATTAQRSVRAGGKHNDLENVGYTARHHTFFEMLGNFSFGDYFKRDAIHYAWELLTGVYQLPKDKLWVTVYHEDDEAHDIWAKEVGVPVERIIRIGDNKGARYASDNFWQMADVGPCGPCSEIFYDHGPDVWGGPPGSPEEDGDRYIEIWNLVFMQFSRDAQGNMTPLPKQCVDTGMGLERIAAVLQHVHSNYEIDLFQALIKAAGRETGVSDLTNNSLKVIADHIRACSFLIVDGVIPGNEGRGYVLRRIVRRAIRHGYKLGKKGSFFHRMVADLVAQMGDAYPELKEAEQRVTDVLRQEEERFFETIEHGMSILESALADLEAKGGKTLDGELAFKLHDTYGFPLDLTADVCREREVTVDEAAFDEAMARQREQARAAGKFKMAQGLEYSGAKTTFHGYEEIVFDDAKVIALYVDGASVKEVRDGRQAVVVLDHTPFYAESGGQVGDQGVLANASVRFAVSDTLKVQADVVGHHGTLEQGTLKVGDVVKAEIDAVRRARTARNHSATHLMHKALREVLGSHVQQKGSLVDADKTRFDFAHNAPMTDEQIRRVEEIVNAEVLANAPGIVRVMPFDEAVKGGAMALFGEKYGDEVRVLDLGFSRELCGGTHVHRTGDIGLFKIVMEGGVAAGIRRVEAITGDNAVRFVQDLDARINAAAAVLKAQPSELTQRITQVQDQVKSLEKELSALKSKMASSQGDELAGQAIEVGGVHVLAATLEGADVKTLRETVDKLKDKLKSAAIVLASVEGGKVSLIAGVTADASKKVKAGELVNFVAQQVGGKGGGRPDMAQAGGTEPANLPAALAGVKGWVEGQL.

4 residues coordinate Zn(2+): histidine 564, histidine 568, cysteine 665, and histidine 669.

It belongs to the class-II aminoacyl-tRNA synthetase family. The cofactor is Zn(2+).

It is found in the cytoplasm. It carries out the reaction tRNA(Ala) + L-alanine + ATP = L-alanyl-tRNA(Ala) + AMP + diphosphate. In terms of biological role, catalyzes the attachment of alanine to tRNA(Ala) in a two-step reaction: alanine is first activated by ATP to form Ala-AMP and then transferred to the acceptor end of tRNA(Ala). Also edits incorrectly charged Ser-tRNA(Ala) and Gly-tRNA(Ala) via its editing domain. The protein is Alanine--tRNA ligase of Paraburkholderia phytofirmans (strain DSM 17436 / LMG 22146 / PsJN) (Burkholderia phytofirmans).